A 975-amino-acid chain; its full sequence is Glycine dehydrogenase (decarboxylating) (975 aa).

At lysine 723 the chain carries N6-(pyridoxal phosphate)lysine.

This sequence belongs to the GcvP family. As to quaternary structure, the glycine cleavage system is composed of four proteins: P, T, L and H. Requires pyridoxal 5'-phosphate as cofactor.

The enzyme catalyses N(6)-[(R)-lipoyl]-L-lysyl-[glycine-cleavage complex H protein] + glycine + H(+) = N(6)-[(R)-S(8)-aminomethyldihydrolipoyl]-L-lysyl-[glycine-cleavage complex H protein] + CO2. Its function is as follows. The glycine cleavage system catalyzes the degradation of glycine. The P protein binds the alpha-amino group of glycine through its pyridoxal phosphate cofactor; CO(2) is released and the remaining methylamine moiety is then transferred to the lipoamide cofactor of the H protein. In Burkholderia lata (strain ATCC 17760 / DSM 23089 / LMG 22485 / NCIMB 9086 / R18194 / 383), this protein is Glycine dehydrogenase (decarboxylating).